A 292-amino-acid polypeptide reads, in one-letter code: Putative two-component response regulator-like APRR4 (292 aa).

In terms of domain architecture, Response regulatory spans 43-158; the sequence is RVLVFDEDPS…DLRIVFKHLV (116 aa). The disordered stretch occupies residues 168 to 215; the sequence is VTGEAEKAAGEKSSSVGDSTIRNPNKSKRSSCLEAEVNEEDRHDHNDR. The segment covering 179–191 has biased composition (polar residues); the sequence is KSSSVGDSTIRNP. Residues 225–275 constitute a DNA-binding region (myb-like GARP); that stretch reads RVVWDEELHQNFLNAVDFLGLERAVPKKILDVMKVDYISRENVASHLQVTF.

This sequence belongs to the ARR-like family. As to quaternary structure, binds the target DNA as a monomer.

It localises to the nucleus. In terms of biological role, transcriptional activator that binds specifically to the DNA sequence 5'-[AG]GATT-3'. The polypeptide is Putative two-component response regulator-like APRR4 (APRR4) (Arabidopsis thaliana (Mouse-ear cress)).